A 908-amino-acid polypeptide reads, in one-letter code: Protein translocase subunit SecA (908 aa).

ATP is bound by residues Q87, 105–109, and D512; that span reads GEGKT. The tract at residues 876 to 908 is disordered; that stretch reads QAPMIRDGEKVGRNDPCPCGSGRKYKQCHGKLS. Zn(2+) contacts are provided by C892, C894, C903, and H904. Positions 898–908 are enriched in basic residues; sequence RKYKQCHGKLS.

The protein belongs to the SecA family. In terms of assembly, monomer and homodimer. Part of the essential Sec protein translocation apparatus which comprises SecA, SecYEG and auxiliary proteins SecDF-YajC and YidC. Requires Zn(2+) as cofactor.

It localises to the cell inner membrane. The protein localises to the cytoplasm. It catalyses the reaction ATP + H2O + cellular proteinSide 1 = ADP + phosphate + cellular proteinSide 2.. Part of the Sec protein translocase complex. Interacts with the SecYEG preprotein conducting channel. Has a central role in coupling the hydrolysis of ATP to the transfer of proteins into and across the cell membrane, serving both as a receptor for the preprotein-SecB complex and as an ATP-driven molecular motor driving the stepwise translocation of polypeptide chains across the membrane. In Shewanella baltica (strain OS185), this protein is Protein translocase subunit SecA.